The chain runs to 508 residues: Photosystem II CP47 reaction center protein (508 aa).

6 helical membrane-spanning segments follow: residues 21-36 (AVHI…WAGS), 101-115 (IVFS…IWHW), 140-156 (GIHL…FGAF), 203-218 (IAAG…FHLS), 237-252 (VLSS…AFVV), and 457-472 (TFAL…HGAR).

Belongs to the PsbB/PsbC family. PsbB subfamily. In terms of assembly, PSII is composed of 1 copy each of membrane proteins PsbA, PsbB, PsbC, PsbD, PsbE, PsbF, PsbH, PsbI, PsbJ, PsbK, PsbL, PsbM, PsbT, PsbX, PsbY, PsbZ, Psb30/Ycf12, at least 3 peripheral proteins of the oxygen-evolving complex and a large number of cofactors. It forms dimeric complexes. The cofactor is Binds multiple chlorophylls. PSII binds additional chlorophylls, carotenoids and specific lipids..

Its subcellular location is the plastid. It localises to the chloroplast thylakoid membrane. Its function is as follows. One of the components of the core complex of photosystem II (PSII). It binds chlorophyll and helps catalyze the primary light-induced photochemical processes of PSII. PSII is a light-driven water:plastoquinone oxidoreductase, using light energy to abstract electrons from H(2)O, generating O(2) and a proton gradient subsequently used for ATP formation. The sequence is that of Photosystem II CP47 reaction center protein from Agrostis stolonifera (Creeping bentgrass).